The sequence spans 363 residues: Peptide chain release factor 1 (363 aa).

N5-methylglutamine is present on Q237.

This sequence belongs to the prokaryotic/mitochondrial release factor family. In terms of processing, methylated by PrmC. Methylation increases the termination efficiency of RF1.

It localises to the cytoplasm. In terms of biological role, peptide chain release factor 1 directs the termination of translation in response to the peptide chain termination codons UAG and UAA. In Marinobacter nauticus (strain ATCC 700491 / DSM 11845 / VT8) (Marinobacter aquaeolei), this protein is Peptide chain release factor 1.